Here is a 721-residue protein sequence, read N- to C-terminus: Photosystem I P700 chlorophyll a apoprotein A1 (721 aa).

8 consecutive transmembrane segments (helical) span residues 61–84 (VFSA…FHGA), 147–170 (LYCT…FHYH), 186–210 (LNHH…HVSL), 282–300 (TAHH…GHMY), 337–360 (WHAQ…HHMY), 376–402 (LSLF…IFMV), 424–446 (AIVS…LYIH), and 522–540 (FLVH…LILL). [4Fe-4S] cluster contacts are provided by C564 and C573. Transmembrane regions (helical) follow at residues 580–601 (HVFL…HFSW) and 655–677 (LSAY…MFLF). H666 contacts chlorophyll a'. The chlorophyll a site is built by M674 and Y682. W683 lines the phylloquinone pocket. A helical transmembrane segment spans residues 715-721 (AVGVAHY).

This sequence belongs to the PsaA/PsaB family. In terms of assembly, the PsaA/B heterodimer binds the P700 chlorophyll special pair and subsequent electron acceptors. PSI consists of a core antenna complex that captures photons, and an electron transfer chain that converts photonic excitation into a charge separation. The eukaryotic PSI reaction center is composed of at least 11 subunits. Requires P700 is a chlorophyll a/chlorophyll a' dimer, A0 is one or more chlorophyll a, A1 is one or both phylloquinones and FX is a shared 4Fe-4S iron-sulfur center. as cofactor.

The protein resides in the plastid. Its subcellular location is the chloroplast thylakoid membrane. It catalyses the reaction reduced [plastocyanin] + hnu + oxidized [2Fe-2S]-[ferredoxin] = oxidized [plastocyanin] + reduced [2Fe-2S]-[ferredoxin]. In terms of biological role, psaA and PsaB bind P700, the primary electron donor of photosystem I (PSI), as well as the electron acceptors A0, A1 and FX. PSI is a plastocyanin-ferredoxin oxidoreductase, converting photonic excitation into a charge separation, which transfers an electron from the donor P700 chlorophyll pair to the spectroscopically characterized acceptors A0, A1, FX, FA and FB in turn. Oxidized P700 is reduced on the lumenal side of the thylakoid membrane by plastocyanin. The sequence is that of Photosystem I P700 chlorophyll a apoprotein A1 from Ginkgo biloba (Ginkgo).